A 221-amino-acid polypeptide reads, in one-letter code: Large ribosomal subunit protein uL3 (221 aa).

The protein belongs to the universal ribosomal protein uL3 family. Part of the 50S ribosomal subunit. Forms a cluster with proteins L14 and L19.

Its function is as follows. One of the primary rRNA binding proteins, it binds directly near the 3'-end of the 23S rRNA, where it nucleates assembly of the 50S subunit. The chain is Large ribosomal subunit protein uL3 from Chlamydia trachomatis serovar A (strain ATCC VR-571B / DSM 19440 / HAR-13).